The sequence spans 291 residues: DegV domain-containing protein CPE0026 (291 aa).

A DegV domain is found at 4-286; it reads FVIFTDSAAD…IGTLAVFFLG (283 aa). Hexadecanoate contacts are provided by Thr-63 and Ser-95.

May bind long-chain fatty acids, such as palmitate, and may play a role in lipid transport or fatty acid metabolism. This is DegV domain-containing protein CPE0026 from Clostridium perfringens (strain 13 / Type A).